We begin with the raw amino-acid sequence, 266 residues long: Metallo-beta-lactamase VIM-2 (266 aa).

The first 20 residues, 1 to 20 (MFKLLSKLLVYLTASIMAIA), serve as a signal peptide directing secretion. 3 residues coordinate Zn(2+): histidine 114, histidine 116, and cysteine 198.

The protein belongs to the metallo-beta-lactamase superfamily. Class-B beta-lactamase family. Monomer. Zn(2+) serves as cofactor.

The protein resides in the periplasm. It carries out the reaction a beta-lactam + H2O = a substituted beta-amino acid. Its activity is regulated as follows. Inhibited by chelating agents such as EDTA. Inhibited by a fungal natural product, aspergillomarasmine A (AMA). Inhibited by 2-triazolylthioacetamides. Class B beta-lactamase which confers resistance to the beta-lactam antibiotics, including penicillins, cephalosporins and carbapenems. Acts via hydrolysis of the beta-lactam ring. Has penicillin-, cephalosporin- and carbapenem-hydrolyzing activities. The chain is Metallo-beta-lactamase VIM-2 from Escherichia coli.